The primary structure comprises 534 residues: NAD(P)H-quinone oxidoreductase chain 4 (534 aa).

The next 14 helical transmembrane spans lie at 12 to 32, 44 to 64, 94 to 114, 120 to 140, 144 to 164, 176 to 196, 220 to 240, 251 to 271, 285 to 305, 314 to 334, 340 to 360, 384 to 404, 425 to 445, and 472 to 492; these read FPWL…IPFF, FALS…INGF, ISMP…LAAW, PKLF…VFAV, LLFF…LAIW, FIIY…AMGF, ILCY…VPLH, TAPV…YALL, FAPL…LTSF, IAYS…SFSS, AMLQ…LVGA, FALW…SGFV, VIMA…LLSM, and VYII…PRLV.

It belongs to the complex I subunit 4 family.

The protein resides in the cellular thylakoid membrane. It carries out the reaction a plastoquinone + NADH + (n+1) H(+)(in) = a plastoquinol + NAD(+) + n H(+)(out). The enzyme catalyses a plastoquinone + NADPH + (n+1) H(+)(in) = a plastoquinol + NADP(+) + n H(+)(out). In terms of biological role, NDH-1 shuttles electrons from NAD(P)H, via FMN and iron-sulfur (Fe-S) centers, to quinones in the respiratory chain. The immediate electron acceptor for the enzyme in this species is believed to be plastoquinone. Couples the redox reaction to proton translocation (for every two electrons transferred, four hydrogen ions are translocated across the cytoplasmic membrane), and thus conserves the redox energy in a proton gradient. This Prochlorococcus marinus (strain MIT 9312) protein is NAD(P)H-quinone oxidoreductase chain 4.